A 183-amino-acid chain; its full sequence is uncharacterized protein (183 aa).

The 182-residue stretch at 1–182 (MFRVVHGDIT…VALKVLERDE (182 aa)) folds into the Macro domain.

This is an uncharacterized protein from Pyrococcus abyssi (strain GE5 / Orsay).